The chain runs to 549 residues: Probable protein kinase UbiB (549 aa).

The Protein kinase domain occupies 123–501; it reads DFDDVPLASA…QHKAHKSNYL (379 aa). ATP-binding positions include 129–137 and lysine 152; that span reads LASASIAQV. Catalysis depends on aspartate 287, which acts as the Proton acceptor. 2 helical membrane-spanning segments follow: residues 498–517 and 521–540; these read SNYLLITSAVFVICGTILFT and TLWASLLCLGTGAGLWLLGW.

This sequence belongs to the ABC1 family. UbiB subfamily.

The protein localises to the cell inner membrane. It participates in cofactor biosynthesis; ubiquinone biosynthesis [regulation]. Functionally, is probably a protein kinase regulator of UbiI activity which is involved in aerobic coenzyme Q (ubiquinone) biosynthesis. The sequence is that of Probable protein kinase UbiB from Shewanella denitrificans (strain OS217 / ATCC BAA-1090 / DSM 15013).